The following is a 221-amino-acid chain: Orotidine 5'-phosphate decarboxylase (221 aa).

Residues Asp12, Lys34, Asp60–Thr69, Ser117, Pro170–Ser180, Gly193, and Arg194 each bind substrate. Residue Lys62 is the Proton donor of the active site.

Belongs to the OMP decarboxylase family. Type 1 subfamily. Homodimer.

The enzyme catalyses orotidine 5'-phosphate + H(+) = UMP + CO2. It functions in the pathway pyrimidine metabolism; UMP biosynthesis via de novo pathway; UMP from orotate: step 2/2. In terms of biological role, catalyzes the decarboxylation of orotidine 5'-monophosphate (OMP) to uridine 5'-monophosphate (UMP). The polypeptide is Orotidine 5'-phosphate decarboxylase (Methanosarcina acetivorans (strain ATCC 35395 / DSM 2834 / JCM 12185 / C2A)).